The sequence spans 389 residues: Stilbene synthase 3 (389 aa).

Position 55-58 (55-58 (KFQR)) interacts with substrate. The active site involves Cys164. Substrate contacts are provided by residues Leu267 and 305-307 (GGR).

The protein belongs to the thiolase-like superfamily. Chalcone/stilbene synthases family. Homodimer.

It is found in the cytoplasm. It carries out the reaction 4-coumaroyl-CoA + 3 malonyl-CoA + 3 H(+) = trans-resveratrol + 4 CO2 + 4 CoA. It participates in phytoalexin biosynthesis; 3,4',5-trihydroxystilbene biosynthesis; 3,4',5-trihydroxystilbene from trans-4-coumarate: step 2/2. The chain is Stilbene synthase 3 from Arachis hypogaea (Peanut).